We begin with the raw amino-acid sequence, 604 residues long: Transcriptional repressor rco-1 (604 aa).

Disordered regions lie at residues 87–110 and 124–264; these read RGGA…PAIG and GGQA…DRLP. Pro residues predominate over residues 144-163; that stretch reads MPAPPGLQGPPPPPPPPSQQ. 2 stretches are compositionally biased toward low complexity: residues 164–177 and 190–209; these read PPFQ…QGPG and PGPA…PATP. The segment covering 210–229 has biased composition (polar residues); that stretch reads QINTPIPYNGGPAQSPQVPT. WD repeat units lie at residues 295–324, 342–372, 384–414, 425–455, 469–499, 523–553, and 565–600; these read QHES…QIYD, TGDL…RVWD, GHEQ…RLWD, SIED…RVWD, GHKD…KMWE, GHRD…QFWD, and GHKN…RIWS.

Represses transcription by RNA polymerase II. May be involved at several stages of conidiation and other growth and development processes. Appears to regulate genes that are expressed in asexual and sexual spore pathways. The protein is Transcriptional repressor rco-1 (rco-1) of Neurospora crassa (strain ATCC 24698 / 74-OR23-1A / CBS 708.71 / DSM 1257 / FGSC 987).